A 273-amino-acid polypeptide reads, in one-letter code: Large ribosomal subunit protein uL2 (273 aa).

2 disordered regions span residues 28–53 and 221–273; these read KPFA…TTRH and RGTA…RRSK. The segment covering 39 to 48 has biased composition (low complexity); that stretch reads KSGGRNNNGR.

Belongs to the universal ribosomal protein uL2 family. In terms of assembly, part of the 50S ribosomal subunit. Forms a bridge to the 30S subunit in the 70S ribosome.

One of the primary rRNA binding proteins. Required for association of the 30S and 50S subunits to form the 70S ribosome, for tRNA binding and peptide bond formation. It has been suggested to have peptidyltransferase activity; this is somewhat controversial. Makes several contacts with the 16S rRNA in the 70S ribosome. The protein is Large ribosomal subunit protein uL2 of Enterobacter sp. (strain 638).